The chain runs to 419 residues: MATIFYAEPELVIGHNRKILFVNPNDLQIFKEIELPTDLLSSCGLKSSSTSTAEQQSAAAETGGGSVVEGEEPKDTKTIEAGASASAPTVSVQNVSYSPDRQLLAVTTAGQKALVLYKCRPEHAQLVSVRALARASSAIRFAADSSSVLVTDKTGDCYQYDCIETEALPRLLLGHLSIVYDILWTGDQQHIITSDRDDKIRVTNYPATFDIHSYCLGHKEFVSGLALLSDEHICSVSGDKTLRVWNFKAGKELLRTDLPAPAVRLHHRQLPQKSDGDNADNLQRHQLGILFYDHVDAVGLYELEGNGDVWSVTVSQQIRADAGSWNICNFALTEERVYVMGAKDERLTFRCYNSSNGEPITSQLPEGWLTMILDQFPGDAGSCLPEDLSVWFKKRFDNVSDYLERKKRRIEEQQQQHKC.

A compositionally biased stretch (low complexity) spans Ser-51 to Glu-61. A disordered region spans residues Ser-51–Asp-75. 3 WD repeats span residues Ala-87–Val-127, Gly-174–Ser-213, and Gly-217–Arg-255.

This sequence belongs to the WD repeat TRM82 family. Forms a heterodimer with the catalytic subunit Mettl1. Interacts with mei-P26 and weakly interacts with bgcn; required for the function or formation of the mei-P26-bgcn-bam-sxl complex. Interacts with nanos; may be involved in mei-P26-dependent derepression of the BMP signaling pathway. Interacts with Myc; the interaction may be mediated by mei-P26 and may be involved in the regulation of ribosome biogenesis. In testis, it is present at high level in hub cells, a niche for germline stem cells of testis. Ubiquitously expressed in all testicular cells throughout spermatogenesis. Ubiquitously expressed in all germline and somatic cells of the ovary.

The protein localises to the nucleus. Its subcellular location is the cytoplasm. It functions in the pathway tRNA modification; N(7)-methylguanine-tRNA biosynthesis. Its function is as follows. Required for the Mettl1-dependent formation of N(7)-methylguanine at position 46 (m7G46) in tRNA. In the Mettl1-wuho methyltransferase complex, it is required to stabilize and induce conformational changes of the catalytic subunit. Required for binding of nanos mRNA and repression of translation by the mei-P26-bgcn-bam-sxl complex. May cooperate with mei-P26 and nanos to derepress the BMP signaling pathway. May cooperate with mei-P26 to suppress expression of a subset of microRNAs. May cooperate with mei-P26 to regulate bam expression levels in germline cells during gametogenesis. Required to promote mitosis to meiosis transition during gametogenesis. May regulate germline cell division in part by regulating ribosome biogenesis. The polypeptide is tRNA (guanine-N(7)-)-methyltransferase non-catalytic subunit wuho (Drosophila willistoni (Fruit fly)).